Here is a 313-residue protein sequence, read N- to C-terminus: D-apiose import binding protein (313 aa).

The first 26 residues, 1–26 (MKLTRRLTLAAFASALALGTAMPAFA), serve as a signal peptide directing secretion. D-apiofuranose is bound by residues N39, 115–116 (DR), 162–164 (DTN), R168, N218, D243, and Q263.

This sequence belongs to the bacterial solute-binding protein 2 family.

The protein localises to the periplasm. Functionally, part of an ABC transporter complex involved in D-apiose import. Binds D-apiose, D-ribose and D-ribulose. The protein is D-apiose import binding protein of Rhizobium etli (strain ATCC 51251 / DSM 11541 / JCM 21823 / NBRC 15573 / CFN 42).